A 241-amino-acid chain; its full sequence is Lysoplasmalogenase TMEM86A (241 aa).

Residues 1 to 13 (MVSPVTVVKSEGP) lie on the Cytoplasmic side of the membrane. Residues 14–30 (KLVPFFKATCVYFVLWL) form a helical membrane-spanning segment. Residues 31-36 (PSSSPS) are Extracellular-facing. A helical transmembrane segment spans residues 37 to 59 (WVSALIKCLPIFCLWLFLLAHGV). The Cytoplasmic portion of the chain corresponds to 60–67 (RFLLAHPS). A helical transmembrane segment spans residues 68–87 (ASLIFVGLVFSAVGDAFLIW). The Extracellular segment spans residues 88–96 (QDHGYFEHG). Residues 97 to 113 (LLMFAVAHILYAAAFGM) traverse the membrane as a helical segment. Residues 114 to 119 (RPLALR) lie on the Cytoplasmic side of the membrane. Residues 120–136 (TGLVIGVLSGLCYALLY) traverse the membrane as a helical segment. The Extracellular portion of the chain corresponds to 137-142 (PGLSGA). Residues 143–159 (FTYLVGVYVALISFMGW) form a helical membrane-spanning segment. Over 160–176 (RAMAGLRLVGAAWRWTE) the chain is Cytoplasmic. Residues 177–195 (LAAGGGALLFILSDLTIAL) traverse the membrane as a helical segment. The Extracellular segment spans residues 196–206 (NKFCFPVPYSR). The helical transmembrane segment at 207–225 (ALIMSTYYAAQMLIALSAV) threads the bilayer. Over 226–241 (ESREPVGEDYRLSKAD) the chain is Cytoplasmic.

Belongs to the TMEM86 family. In terms of tissue distribution, highly expressed in the jejunum, white adipose tissue, kidney and macrophages.

The protein localises to the endoplasmic reticulum membrane. The enzyme catalyses a 1-O-(1Z-alkenyl)-sn-glycero-3-phosphocholine + H2O = a 2,3-saturated aldehyde + sn-glycerol 3-phosphocholine. The catalysed reaction is a 1-O-(1Z-alkenyl)-sn-glycero-3-phosphoethanolamine + H2O = a 2,3-saturated aldehyde + sn-glycero-3-phosphoethanolamine. In terms of biological role, catalyzes the hydrolysis of the vinyl ether bond of choline or ethanolamine lysoplasmalogens, forming fatty aldehyde and glycerophosphocholine or glycerophosphoethanolamine, respectively and is specific for the sn-2-deacylated (lyso) form of plasmalogen. Plays an important role in lysoplasmalogen metabolism in the adipocyte tissue and macrophages. This chain is Lysoplasmalogenase TMEM86A (Tmem86a), found in Mus musculus (Mouse).